The sequence spans 161 residues: Phosphopantetheine adenylyltransferase (161 aa).

Residue Thr-9 participates in substrate binding. ATP is bound by residues 9-10 (TF) and His-17. 3 residues coordinate substrate: Lys-41, Leu-73, and Arg-87. ATP-binding positions include 88 to 90 (GLR), Glu-98, and 123 to 129 (YQFISGT).

This sequence belongs to the bacterial CoaD family. Homohexamer. Mg(2+) serves as cofactor.

The protein resides in the cytoplasm. It carries out the reaction (R)-4'-phosphopantetheine + ATP + H(+) = 3'-dephospho-CoA + diphosphate. It participates in cofactor biosynthesis; coenzyme A biosynthesis; CoA from (R)-pantothenate: step 4/5. In terms of biological role, reversibly transfers an adenylyl group from ATP to 4'-phosphopantetheine, yielding dephospho-CoA (dPCoA) and pyrophosphate. This chain is Phosphopantetheine adenylyltransferase, found in Cupriavidus necator (strain ATCC 17699 / DSM 428 / KCTC 22496 / NCIMB 10442 / H16 / Stanier 337) (Ralstonia eutropha).